The following is a 115-amino-acid chain: Phosphoribosyl-AMP cyclohydrolase (115 aa).

Aspartate 80 serves as a coordination point for Mg(2+). Cysteine 81 serves as a coordination point for Zn(2+). Residues aspartate 82 and aspartate 84 each coordinate Mg(2+). Residues cysteine 97 and cysteine 104 each contribute to the Zn(2+) site.

The protein belongs to the PRA-CH family. In terms of assembly, homodimer. The cofactor is Mg(2+). Requires Zn(2+) as cofactor.

It is found in the cytoplasm. It catalyses the reaction 1-(5-phospho-beta-D-ribosyl)-5'-AMP + H2O = 1-(5-phospho-beta-D-ribosyl)-5-[(5-phospho-beta-D-ribosylamino)methylideneamino]imidazole-4-carboxamide. It functions in the pathway amino-acid biosynthesis; L-histidine biosynthesis; L-histidine from 5-phospho-alpha-D-ribose 1-diphosphate: step 3/9. Catalyzes the hydrolysis of the adenine ring of phosphoribosyl-AMP. The protein is Phosphoribosyl-AMP cyclohydrolase of Nocardia farcinica (strain IFM 10152).